We begin with the raw amino-acid sequence, 421 residues long: MALLKSFIDVGSDSHFPIQNLPYGVFKPESNSTPRPAVAIGDLVLDLSAISEAGLFDGLILKDADCFLQPNLNKFLAMGRPAWKEARSTLQRILSSNEPILRDNDVLRRKSFHQMSKVEMIVPMVIGDYTDFFASMHHAKNCGLMFRGPENAINPNWFRLPIAYHGRASSIVISGTDIIRPRGQGHPQGNSEPYFGPSKKLDFELEMAAVVGPGNELGKPIDVNNAADHIFGLLLMNDWSARDIQAWEYVPLGPFLGKSFGTTISPWIVTLDALEPFGCQAPKQDPPPLPYLAEKESVNYDISLEVQLKPSGRDDSCVITKSNFQNLYWTITQQLAHHTVNGCNLRPGDLLGTGTISGPEPDSYGCLLELTWNGQKPLSLNGTTQTFLEDGDQVTFSGVCKGDGYNVGFGTCTGKIVPSPP.

D131 contributes to the Ca(2+) binding site. The active-site Proton acceptor is the H138. A substrate-binding site is contributed by R147. The Ca(2+) site is built by E204, E206, and D238. D238 contacts Mg(2+). Positions 245 and 249 each coordinate substrate. Residues K258 and T262 each contribute to the Mg(2+) site. T355 lines the substrate pocket.

This sequence belongs to the FAH family. Ca(2+) serves as cofactor. Requires Mg(2+) as cofactor.

The enzyme catalyses 4-fumarylacetoacetate + H2O = acetoacetate + fumarate + H(+). The protein operates within amino-acid degradation; L-phenylalanine degradation; acetoacetate and fumarate from L-phenylalanine: step 6/6. Converts fumarylacetoacetate to acetoacetate and fumarate. Involved in tyrosine catabolic pathway. Catalyzes the final step in the tyrosine degradation pathway. This Arabidopsis thaliana (Mouse-ear cress) protein is Fumarylacetoacetase.